Reading from the N-terminus, the 227-residue chain is ATP-dependent dethiobiotin synthetase BioD (227 aa).

13 to 18 lines the ATP pocket; sequence NIGKTV. Mg(2+) is bound at residue Thr17. Residue Lys38 is part of the active site. ATP is bound by residues Asp55 and 116–119; that span reads EGIG. Mg(2+) is bound by residues Asp55 and Glu116.

The protein belongs to the dethiobiotin synthetase family. In terms of assembly, homodimer. It depends on Mg(2+) as a cofactor.

The protein resides in the cytoplasm. The enzyme catalyses (7R,8S)-7,8-diammoniononanoate + CO2 + ATP = (4R,5S)-dethiobiotin + ADP + phosphate + 3 H(+). It functions in the pathway cofactor biosynthesis; biotin biosynthesis; biotin from 7,8-diaminononanoate: step 1/2. Its function is as follows. Catalyzes a mechanistically unusual reaction, the ATP-dependent insertion of CO2 between the N7 and N8 nitrogen atoms of 7,8-diaminopelargonic acid (DAPA, also called 7,8-diammoniononanoate) to form a ureido ring. This Buchnera aphidicola subsp. Baizongia pistaciae (strain Bp) protein is ATP-dependent dethiobiotin synthetase BioD.